The chain runs to 890 residues: Nucleoside hydrolase 3 (890 aa).

An N-terminal signal peptide occupies residues 1–21 (MLTSPTLKSLWFLFTILGLLG). N-linked (GlcNAc...) asparagine glycans are attached at residues asparagine 55, asparagine 232, asparagine 371, asparagine 485, asparagine 580, asparagine 655, and asparagine 740.

The protein belongs to the IUNH family.

It localises to the secreted. It is found in the extracellular space. The protein resides in the apoplast. The catalysed reaction is a purine D-ribonucleoside + H2O = a purine nucleobase + D-ribose. The enzyme catalyses inosine + H2O = hypoxanthine + D-ribose. It catalyses the reaction adenosine + H2O = D-ribose + adenine. Functionally, extracellular purine-specific hydrolase present in the apoplastic fluid involved in the degradation of extracellular nucleosides, including inosine and adenosine, and which may participate in wound and pathogen responses (e.g. Botrytis cinerea). In Arabidopsis thaliana (Mouse-ear cress), this protein is Nucleoside hydrolase 3.